The sequence spans 427 residues: Adenylosuccinate synthetase (427 aa).

GTP contacts are provided by residues 12 to 18 and 40 to 42; these read GDEGKGK and GHT. Residue D13 is the Proton acceptor of the active site. 2 residues coordinate Mg(2+): D13 and G40. Residues 13–16, 38–41, T126, R140, Q221, T236, and R299 contribute to the IMP site; these read DEGK and NAGH. The Proton donor role is filled by H41. Residue 295–301 coordinates substrate; it reads STTKRPR. Residues R301, 327 to 329, and 409 to 411 contribute to the GTP site; these read KLD and SVG.

Belongs to the adenylosuccinate synthetase family. Homodimer. Requires Mg(2+) as cofactor.

Its subcellular location is the cytoplasm. The catalysed reaction is IMP + L-aspartate + GTP = N(6)-(1,2-dicarboxyethyl)-AMP + GDP + phosphate + 2 H(+). Its pathway is purine metabolism; AMP biosynthesis via de novo pathway; AMP from IMP: step 1/2. In terms of biological role, plays an important role in the de novo pathway of purine nucleotide biosynthesis. Catalyzes the first committed step in the biosynthesis of AMP from IMP. The protein is Adenylosuccinate synthetase of Borrelia duttonii (strain Ly).